We begin with the raw amino-acid sequence, 1076 residues long: Nickel and cobalt resistance protein CnrA (1076 aa).

The next 12 helical transmembrane spans lie at 14–34 (WLVL…LNLL), 366–386 (TVAK…FALL), 390–410 (RAAT…AIGM), 418–438 (NLMS…VIIV), 475–495 (PTVY…TFQG), 502–522 (SPMV…SLTF), 561–581 (PMPF…AFTF), 903–923 (RLAI…YMAI), 928–948 (LTAT…FALL), 959–979 (AVGF…LISA), 1003–1023 (RPVL…AIAT), and 1035–1055 (TVVI…LPAL).

This sequence belongs to the resistance-nodulation-cell division (RND) (TC 2.A.6) family.

It localises to the cell inner membrane. In terms of biological role, the products of the genes cnrA, cnrB, and cnrC are likely to form a membrane-bound protein complex catalyzing an energy-dependent efflux of Ni(2+) and Co(2+). The mechanism of action of the CnrCBA complex may be that of a proton/cation antiporter. The sequence is that of Nickel and cobalt resistance protein CnrA (cnrA) from Cupriavidus metallidurans (strain ATCC 43123 / DSM 2839 / NBRC 102507 / CH34) (Ralstonia metallidurans).